A 264-amino-acid chain; its full sequence is Thymidylate synthase (264 aa).

Residue R21 participates in dUMP binding. Residue H51 participates in (6R)-5,10-methylene-5,6,7,8-tetrahydrofolate binding. Position 126–127 (126–127 (RR)) interacts with dUMP. The active-site Nucleophile is the C146. DUMP contacts are provided by residues 166 to 169 (RSCD), N177, and 207 to 209 (HLY). Residue D169 participates in (6R)-5,10-methylene-5,6,7,8-tetrahydrofolate binding. A (6R)-5,10-methylene-5,6,7,8-tetrahydrofolate-binding site is contributed by S263.

It belongs to the thymidylate synthase family. Bacterial-type ThyA subfamily. Homodimer.

It is found in the cytoplasm. It catalyses the reaction dUMP + (6R)-5,10-methylene-5,6,7,8-tetrahydrofolate = 7,8-dihydrofolate + dTMP. It functions in the pathway pyrimidine metabolism; dTTP biosynthesis. Catalyzes the reductive methylation of 2'-deoxyuridine-5'-monophosphate (dUMP) to 2'-deoxythymidine-5'-monophosphate (dTMP) while utilizing 5,10-methylenetetrahydrofolate (mTHF) as the methyl donor and reductant in the reaction, yielding dihydrofolate (DHF) as a by-product. This enzymatic reaction provides an intracellular de novo source of dTMP, an essential precursor for DNA biosynthesis. The protein is Thymidylate synthase of Buchnera aphidicola subsp. Acyrthosiphon pisum (strain APS) (Acyrthosiphon pisum symbiotic bacterium).